Here is a 398-residue protein sequence, read N- to C-terminus: 4-hydroxy-3-methylbut-2-enyl diphosphate reductase (398 aa).

Cysteine 66 is a [4Fe-4S] cluster binding site. Histidine 96 is a (2E)-4-hydroxy-3-methylbut-2-enyl diphosphate binding site. Position 96 (histidine 96) interacts with dimethylallyl diphosphate. Histidine 96 serves as a coordination point for isopentenyl diphosphate. A [4Fe-4S] cluster-binding site is contributed by cysteine 157. Histidine 185 is a (2E)-4-hydroxy-3-methylbut-2-enyl diphosphate binding site. Histidine 185 contributes to the dimethylallyl diphosphate binding site. Isopentenyl diphosphate is bound at residue histidine 185. Glutamate 187 acts as the Proton donor in catalysis. Threonine 250 contacts (2E)-4-hydroxy-3-methylbut-2-enyl diphosphate. Cysteine 288 serves as a coordination point for [4Fe-4S] cluster. Residues serine 317, serine 318, asparagine 319, and serine 380 each contribute to the (2E)-4-hydroxy-3-methylbut-2-enyl diphosphate site. The dimethylallyl diphosphate site is built by serine 317, serine 318, asparagine 319, and serine 380. The isopentenyl diphosphate site is built by serine 317, serine 318, asparagine 319, and serine 380.

Belongs to the IspH family. [4Fe-4S] cluster is required as a cofactor.

It catalyses the reaction isopentenyl diphosphate + 2 oxidized [2Fe-2S]-[ferredoxin] + H2O = (2E)-4-hydroxy-3-methylbut-2-enyl diphosphate + 2 reduced [2Fe-2S]-[ferredoxin] + 2 H(+). The catalysed reaction is dimethylallyl diphosphate + 2 oxidized [2Fe-2S]-[ferredoxin] + H2O = (2E)-4-hydroxy-3-methylbut-2-enyl diphosphate + 2 reduced [2Fe-2S]-[ferredoxin] + 2 H(+). Its pathway is isoprenoid biosynthesis; dimethylallyl diphosphate biosynthesis; dimethylallyl diphosphate from (2E)-4-hydroxy-3-methylbutenyl diphosphate: step 1/1. It functions in the pathway isoprenoid biosynthesis; isopentenyl diphosphate biosynthesis via DXP pathway; isopentenyl diphosphate from 1-deoxy-D-xylulose 5-phosphate: step 6/6. In terms of biological role, catalyzes the conversion of 1-hydroxy-2-methyl-2-(E)-butenyl 4-diphosphate (HMBPP) into a mixture of isopentenyl diphosphate (IPP) and dimethylallyl diphosphate (DMAPP). Acts in the terminal step of the DOXP/MEP pathway for isoprenoid precursor biosynthesis. The chain is 4-hydroxy-3-methylbut-2-enyl diphosphate reductase from Prochlorococcus marinus subsp. pastoris (strain CCMP1986 / NIES-2087 / MED4).